The following is a 223-amino-acid chain: 3,4-dihydroxy-2-butanone 4-phosphate synthase (223 aa).

D-ribulose 5-phosphate contacts are provided by residues Arg-39–Glu-40, Asp-44, Arg-152–Thr-156, and Glu-176. Glu-40 is a Mg(2+) binding site. His-155 contributes to the Mg(2+) binding site.

Belongs to the DHBP synthase family. As to quaternary structure, homodimer. It depends on Mg(2+) as a cofactor. Mn(2+) is required as a cofactor.

The enzyme catalyses D-ribulose 5-phosphate = (2S)-2-hydroxy-3-oxobutyl phosphate + formate + H(+). The protein operates within cofactor biosynthesis; riboflavin biosynthesis; 2-hydroxy-3-oxobutyl phosphate from D-ribulose 5-phosphate: step 1/1. In terms of biological role, catalyzes the conversion of D-ribulose 5-phosphate to formate and 3,4-dihydroxy-2-butanone 4-phosphate. The polypeptide is 3,4-dihydroxy-2-butanone 4-phosphate synthase (Desulfovibrio desulfuricans (strain ATCC 27774 / DSM 6949 / MB)).